We begin with the raw amino-acid sequence, 347 residues long: GMP reductase (347 aa).

108–131 (ADFEKTKQILDLNPALNFVCIDVA) provides a ligand contact to NADP(+). 2 residues coordinate K(+): glycine 181 and glycine 183. Cysteine 186 acts as the Thioimidate intermediate in catalysis. Residue 216–239 (IVSDGGCTTPGDVAKAFGGGADFV) participates in NADP(+) binding.

It belongs to the IMPDH/GMPR family. GuaC type 1 subfamily. As to quaternary structure, homotetramer.

It catalyses the reaction IMP + NH4(+) + NADP(+) = GMP + NADPH + 2 H(+). In terms of biological role, catalyzes the irreversible NADPH-dependent deamination of GMP to IMP. It functions in the conversion of nucleobase, nucleoside and nucleotide derivatives of G to A nucleotides, and in maintaining the intracellular balance of A and G nucleotides. The protein is GMP reductase of Escherichia coli O139:H28 (strain E24377A / ETEC).